A 684-amino-acid chain; its full sequence is Kinesin-like protein KIN-13B (684 aa).

2 disordered regions span residues 1-31 (MSGR…SNGR) and 71-103 (GNEF…SPGL). 2 stretches are compositionally biased toward polar residues: residues 18 to 31 (LSDN…SNGR) and 79 to 91 (TTPQ…TNQR). The Kinesin motor domain occupies 169-492 (KIKVVVRKRP…LRYADRVKSL (324 aa)). Position 258–265 (258–265 (GQTGSGKT)) interacts with ATP. The disordered stretch occupies residues 574-594 (KPTIQMKSRDMPRPDMKKSNS). Residues 580–594 (KSRDMPRPDMKKSNS) are compositionally biased toward basic and acidic residues. The stretch at 596 to 626 (DNLNALLQEEEDLVNAHRKQVEDTMNIVKEE) forms a coiled coil.

This sequence belongs to the TRAFAC class myosin-kinesin ATPase superfamily. Kinesin family. KIN-13 subfamily.

Acts redundantly with KIN13A to modulate cell wall synthesis and cell expansion via the THE1 pathway. This Arabidopsis thaliana (Mouse-ear cress) protein is Kinesin-like protein KIN-13B.